The chain runs to 2282 residues: Protein Ycf2 (2282 aa).

1637 to 1644 (GSIGTGRS) lines the ATP pocket.

Belongs to the Ycf2 family.

It localises to the plastid. It is found in the chloroplast stroma. Its function is as follows. Probable ATPase of unknown function. Its presence in a non-photosynthetic plant (Epifagus virginiana) and experiments in tobacco indicate that it has an essential function which is probably not related to photosynthesis. This Citrus sinensis (Sweet orange) protein is Protein Ycf2.